Consider the following 389-residue polypeptide: Chromobox protein homolog 8 (389 aa).

Positions 11 to 69 constitute a Chromo domain; it reads FAAEALLKRRIRKGRMEYLVKWKGWSQKYSTWEPEENILDARLLAAFEEREREMELYGP. Phosphoserine occurs at positions 110 and 130. The segment at 124 to 241 is disordered; sequence LRNMGLSPPA…DDTPSGAGKF (118 aa). A compositionally biased stretch (basic and acidic residues) spans 145-189; sequence EAPRDRDRDRDRDRERDRERERERERERERERERERGTSRVDDKP. 6 positions are modified to phosphoserine: Ser191, Ser256, Ser265, Ser311, Ser332, and Ser352. The segment at 298 to 327 is disordered; the sequence is GALDPNGTRVRHGSGPPSSGGGLYRDMGAQ.

As to quaternary structure, component of a PRC1-like complex. Interacts with RING1 RNF2, PCGF1, PCGF2, PCGF3, BMI1, PCGF5 and PCGF6. Interacts with MLLT3 and histone H3. Interacts with PHC2.

Its subcellular location is the nucleus. Its function is as follows. Component of a Polycomb group (PcG) multiprotein PRC1-like complex, a complex class required to maintain the transcriptionally repressive state of many genes, including Hox genes, throughout development. PcG PRC1 complex acts via chromatin remodeling and modification of histones; it mediates monoubiquitination of histone H2A 'Lys-119', rendering chromatin heritably changed in its expressibility. In Homo sapiens (Human), this protein is Chromobox protein homolog 8 (CBX8).